The sequence spans 541 residues: MAGAIIENMSTKKLCIVGGILLVFQIVAFLVGGLIAPAPTTAVPYTAIKCVDVRKNHHKTRWLAPWGPNKCDKIRDIEEAIPREIEANDIVFSVHIPLPSMEMSPWFQFMLFILQLDIAFKLNNQIRENAEISMDVSLGYRDDMFSEWTEMAHERVPRKLKCTFTSPKTPEHEGRYYNCDVLPFMEIGSVAHKYYLLNIRLPVNEKKKINVGIGEIKDIRLVGIHQNGGFTKVWFAMKTFLTPSIFIIMVWYWRRITMMSRPPVLLEKVIFALGISMTFINIPVEWFSIGFDWTWMLLFGDIRQGIFYAMLLSFWIIFCGEHMMDQHERNHIAGYWKQVGPIAVGSFCLFIFDMCERGVQLTNPFYSIWTTDVGTELAMAFIIVAGICLCLYFLFLCFMVFQVFRNISGKQSSLPAMSKVRRLHYEGLIFRFKFLMLITLACAAMTVIFFIVSQVSEGHWKWGGVTVQVSSAFFTGIYGMWNLYVFALMFLYAPSHKNYGEDQSNGDLGVHSGEELQLTTTITHVDGPTEIYKLTRKEAQE.

Over 1–15 (MAGAIIENMSTKKLC) the chain is Cytoplasmic. Residues 16–36 (IVGGILLVFQIVAFLVGGLIA) traverse the membrane as a helical segment. The Lumenal portion of the chain corresponds to 37-232 (PAPTTAVPYT…GIHQNGGFTK (196 aa)). Residues 101 to 232 (MEMSPWFQFM…GIHQNGGFTK (132 aa)) form an interaction with Wnt proteins region. The helical transmembrane segment at 233-253 (VWFAMKTFLTPSIFIIMVWYW) threads the bilayer. At 254-268 (RRITMMSRPPVLLEK) the chain is on the cytoplasmic side. Residues 269–289 (VIFALGISMTFINIPVEWFSI) traverse the membrane as a helical segment. Over 290 to 303 (GFDWTWMLLFGDIR) the chain is Lumenal. Residues 304–324 (QGIFYAMLLSFWIIFCGEHMM) form a helical membrane-spanning segment. The Cytoplasmic segment spans residues 325 to 331 (DQHERNH). A helical transmembrane segment spans residues 332–352 (IAGYWKQVGPIAVGSFCLFIF). Over 353–380 (DMCERGVQLTNPFYSIWTTDVGTELAMA) the chain is Lumenal. The helical transmembrane segment at 381 to 401 (FIIVAGICLCLYFLFLCFMVF) threads the bilayer. Over 402–431 (QVFRNISGKQSSLPAMSKVRRLHYEGLIFR) the chain is Cytoplasmic. A helical transmembrane segment spans residues 432–452 (FKFLMLITLACAAMTVIFFIV). The Lumenal segment spans residues 453 to 471 (SQVSEGHWKWGGVTVQVSS). The helical transmembrane segment at 472–492 (AFFTGIYGMWNLYVFALMFLY) threads the bilayer. Over 493-541 (APSHKNYGEDQSNGDLGVHSGEELQLTTTITHVDGPTEIYKLTRKEAQE) the chain is Cytoplasmic.

It belongs to the wntless family. Interacts with WNT3A. Interacts with WNT1, WNT3 and WNT5. N-glycosylated. As to expression, expressed in the brain, skeletal muscle, heart muscle, lung, gut, liver, and kidney (at protein level). In the brain, expressed in the cortex, striatum, hippocampus and to a lesser extent in the cerebellum (at protein level). Expressed in kidney, lung, skin, intestine, brain, spinal cord, skeleton, eyes, excretion glands, tooth and palatal shelves. In the cerebellum, expressed in Purkinje cells.

Its subcellular location is the golgi apparatus membrane. It is found in the cytoplasmic vesicle membrane. The protein localises to the cell membrane. The protein resides in the endoplasmic reticulum membrane. It localises to the early endosome membrane. Its function is as follows. Regulates Wnt proteins sorting and secretion in a feedback regulatory mechanism. This reciprocal interaction plays a key role in the regulation of expression, subcellular location, binding and organelle-specific association of Wnt proteins. Also plays an important role in establishment of the anterior-posterior body axis formation during development. The sequence is that of Protein wntless homolog (Wls) from Mus musculus (Mouse).